A 344-amino-acid chain; its full sequence is DNA integrity scanning protein DisA (344 aa).

In terms of domain architecture, DAC spans 1–133 (MALLAPGTPI…GRRYLIERPE (133 aa)). ATP-binding positions include Gly-61 and 92–96 (TRHRT).

Belongs to the DisA family. Homooctamer. Mg(2+) serves as cofactor.

The enzyme catalyses 2 ATP = 3',3'-c-di-AMP + 2 diphosphate. Functionally, participates in a DNA-damage check-point. DisA forms globular foci that rapidly scan along the chromosomes searching for lesions. Also has diadenylate cyclase activity, catalyzing the condensation of 2 ATP molecules into cyclic di-AMP (c-di-AMP). c-di-AMP likely acts as a signaling molecule that may couple DNA integrity with a cellular process. The sequence is that of DNA integrity scanning protein DisA from Cutibacterium acnes (strain DSM 16379 / KPA171202) (Propionibacterium acnes).